A 361-amino-acid chain; its full sequence is tRNA/tmRNA (uracil-C(5))-methyltransferase (361 aa).

The S-adenosyl-L-methionine site is built by Q185, Y213, N218, E234, and D294. The active-site Nucleophile is C319. Catalysis depends on E353, which acts as the Proton acceptor.

This sequence belongs to the class I-like SAM-binding methyltransferase superfamily. RNA M5U methyltransferase family. TrmA subfamily.

It catalyses the reaction uridine(54) in tRNA + S-adenosyl-L-methionine = 5-methyluridine(54) in tRNA + S-adenosyl-L-homocysteine + H(+). The catalysed reaction is uridine(341) in tmRNA + S-adenosyl-L-methionine = 5-methyluridine(341) in tmRNA + S-adenosyl-L-homocysteine + H(+). In terms of biological role, dual-specificity methyltransferase that catalyzes the formation of 5-methyluridine at position 54 (m5U54) in all tRNAs, and that of position 341 (m5U341) in tmRNA (transfer-mRNA). This Pseudomonas putida (strain W619) protein is tRNA/tmRNA (uracil-C(5))-methyltransferase.